Consider the following 3993-residue polypeptide: Intermembrane lipid transfer protein VPS13B (3993 aa).

One can recognise a Chorein N-terminal domain in the interval 2 to 102; that stretch reads LESYVTPILM…KDGIQDDHES (101 aa). Residues 100 to 133 form a disordered region; sequence HESCGSNSTNRSTAENTKSSIKPRRIQQAAPADP. The span at 103 to 119 shows a compositional bias: polar residues; sequence CGSNSTNRSTAENTKSS. Ser-413, Ser-998, Ser-1001, and Ser-1032 each carry phosphoserine. 3 disordered regions span residues 1262-1303, 1616-1637, and 1735-1770; these read SPVW…PFSD, DQLK…ERNS, and TKAT…DSGI. Residues 1264–1291 show a composition bias toward polar residues; the sequence is VWSSVGTAPPDTSTCSPSADIGTTTEGD. The span at 1739-1750 shows a compositional bias: basic and acidic residues; sequence EISKQEQKKVDT. Polar residues predominate over residues 1756 to 1770; that stretch reads AETSSRYSGAQDSGI. Residue Ser-1789 is modified to Phosphoserine. A disordered region spans residues 2048-2067; it reads HSSAHSKETSTPSDSILNMD. Residues 2604–2683 enclose the SHR-BD domain; the sequence is HFVICNDTQE…TIQYKGRTAS (80 aa). Positions 3880 to 3993 are localizes the protein to the Golgi apparatus; sequence AFPITEISCA…KNKALRKGFS (114 aa).

This sequence belongs to the VPS13 family. As to quaternary structure, interacts with STX6. Interacts with STX12 (via N-terminus). Interacts with RAB6A isoform 1 (GTP-bound) and isoform 2 (GTP-bound). Interacts with RAB6B (GTP-bound). As to expression, ubiquitously expressed in all examined tissues.

The protein localises to the recycling endosome membrane. Its subcellular location is the cytoplasmic vesicle. It localises to the secretory vesicle. The protein resides in the acrosome membrane. It is found in the golgi apparatus. The protein localises to the cis-Golgi network membrane. Its subcellular location is the endoplasmic reticulum-Golgi intermediate compartment membrane. It localises to the trans-Golgi network membrane. The protein resides in the early endosome membrane. It is found in the lysosome membrane. Functionally, mediates the transfer of lipids between membranes at organelle contact sites. Binds phosphatidylinositol 3-phosphate. Functions as a tethering factor in the slow endocytic recycling pathway, to assist traffic between early and recycling endosomes. Involved in the transport of proacrosomal vesicles to the nuclear dense lamina (NDL) during spermatid development. Plays a role in the assembly of the Golgi apparatus, possibly by mediating trafficking to the Golgi membrane. Plays a role in the development of the nervous system, and may be required for neuron projection development. May also play a role during adipose tissue development. Required for maintenance of the ocular lens. Required for proper organization of the Golgi. The protein is Intermembrane lipid transfer protein VPS13B of Mus musculus (Mouse).